A 151-amino-acid chain; its full sequence is Major curlin subunit (151 aa).

A signal peptide spans 1–20 (MKLLKVAAIAAIVFSGSALA). Residues 71-90 (TQHGGGNGADVGQGSDDSSI) are disordered.

The protein belongs to the CsgA/CsgB family.

Its subcellular location is the fimbrium. Curlin is the structural subunit of the curli fimbriae. Curli are coiled surface structures that assemble preferentially at growth temperatures below 37 degrees Celsius. Curli can bind to fibronectin. This chain is Major curlin subunit (csgA), found in Escherichia coli (strain K12).